The chain runs to 37 residues: Albumin-2 (37 aa).

One copy of the Hemopexin repeat lies at 6–37 (IANFSVLNXEAYLFINDKYVLLDYAPGTXNDK).

As to quaternary structure, dimer. As to expression, expressed in seeds (at protein level).

The protein resides in the cytoplasm. It is found in the cytosol. Its function is as follows. Binds hemin and thiamine. This chain is Albumin-2, found in Lens culinaris (Lentil).